The primary structure comprises 212 residues: MKPYTQTTGLVAPLDRANVDTDQIIPKQFLKSIKRTGFGPNLFDEWRYLDVGQPGQDNSKRPLNPDFVLNQPRYQGASVLLARENFGCGSSREHAPWALDEYGFRTVIAPSYADIFFNNSFKNGLLPIILPEAEVDELFRQVEANEGYQLSIDLAAQTVTRPDGKVLGFEVDPFRKHCLLNGLDDIGLTLQDADAIRAFEDGYRQQQPWLFR.

Belongs to the LeuD family. LeuD type 1 subfamily. In terms of assembly, heterodimer of LeuC and LeuD.

The enzyme catalyses (2R,3S)-3-isopropylmalate = (2S)-2-isopropylmalate. It functions in the pathway amino-acid biosynthesis; L-leucine biosynthesis; L-leucine from 3-methyl-2-oxobutanoate: step 2/4. Functionally, catalyzes the isomerization between 2-isopropylmalate and 3-isopropylmalate, via the formation of 2-isopropylmaleate. The protein is 3-isopropylmalate dehydratase small subunit of Pseudomonas aeruginosa (strain LESB58).